The primary structure comprises 282 residues: Ribosomal RNA small subunit methyltransferase I (282 aa).

This sequence belongs to the methyltransferase superfamily. RsmI family.

Its subcellular location is the cytoplasm. The enzyme catalyses cytidine(1402) in 16S rRNA + S-adenosyl-L-methionine = 2'-O-methylcytidine(1402) in 16S rRNA + S-adenosyl-L-homocysteine + H(+). Functionally, catalyzes the 2'-O-methylation of the ribose of cytidine 1402 (C1402) in 16S rRNA. The polypeptide is Ribosomal RNA small subunit methyltransferase I (Pseudomonas aeruginosa (strain ATCC 15692 / DSM 22644 / CIP 104116 / JCM 14847 / LMG 12228 / 1C / PRS 101 / PAO1)).